Here is a 2365-residue protein sequence, read N- to C-terminus: Voltage-dependent T-type calcium channel subunit alpha-1H (2365 aa).

A disordered region spans residues 1–63; sequence MTEGTLAADE…PGTECGADLG (63 aa). Over 1–100 the chain is Cytoplasmic; the sequence is MTEGTLAADE…SWCLRLVSRR (100 aa). Positions 16–36 are enriched in low complexity; that stretch reads GASPSAPAAPVRASPASPGVP. The I repeat unit spans residues 87-422; it reads TRPRSWCLRL…LCLVVIATQF (336 aa). A helical transmembrane segment spans residues 101–119; that stretch reads WFEHISMLVIMLNCVTLGM. Residues 120–141 lie on the Extracellular side of the membrane; sequence FRPCEDVECRSERCSILEAFDD. Residue aspartate 140 participates in Zn(2+) binding. The helical transmembrane segment at 142–160 threads the bilayer; sequence FIFAFFAVEMVIKMVALGL. The Cytoplasmic portion of the chain corresponds to 161–169; it reads FGQKCYLGD. A helical membrane pass occupies residues 170–184; sequence TWNRLDFFIVMAGMM. Residues 185–193 are Extracellular-facing; it reads EYSLDGHNV. Residues aspartate 189 and histidine 191 each contribute to the Zn(2+) site. The N-linked (GlcNAc...) asparagine glycan is linked to asparagine 192. Residues 194 to 212 traverse the membrane as a helical segment; the sequence is SLSAIRTVRVLRPLRAINR. At 213 to 232 the chain is on the cytoplasmic side; it reads VPSMRILVTLLLDTLPMLGN. Residues 233–253 traverse the membrane as a helical segment; that stretch reads VLLLCFFVFFIFGIVGVQLWA. At 254-394 the chain is on the extracellular side; sequence GLLRNRCFLD…YYVMDAHSFY (141 aa). N-linked (GlcNAc...) asparagine glycosylation occurs at asparagine 271. A helical transmembrane segment spans residues 395–419; it reads NFIYFILLIIVGSFFMINLCLVVIA. Residues 420-790 lie on the Cytoplasmic side of the membrane; it reads TQFSETKQRE…SKLRRIVDSK (371 aa). 3 disordered regions span residues 490–573, 618–656, and 737–761; these read VDPS…SESV, PSGA…SPSP, and GDCR…RWRP. Positions 500–532 are enriched in basic residues; sequence GPRRRPRRAGRRTASVHHLVYHHHHHHHHHYHF. Positions 557–566 are enriched in pro residues; that stretch reads PPSPPSPGHG. The segment covering 621-631 has biased composition (polar residues); sequence AVNSKGSTSSR. Residues 776–1015 form an II repeat; the sequence is WASFSSKLRR…LLVAILVEGF (240 aa). Residues 791-811 traverse the membrane as a helical segment; sequence YFNRGIMAAILVNTLSMGVEY. At 812–824 the chain is on the extracellular side; the sequence is HEQPDELTNALEI. Residues 825 to 846 form a helical membrane-spanning segment; it reads SNIVFTSMFALEMLLKLLACGP. At 847-852 the chain is on the cytoplasmic side; the sequence is LGYIRN. A helical transmembrane segment spans residues 853-871; the sequence is PYNIFDGIVVIISVWEIVG. Over 872–879 the chain is Extracellular; the sequence is QADGGLSV. A helical transmembrane segment spans residues 880-903; the sequence is LRTFRLLRVLKLVRFLPALRRQLV. The Cytoplasmic segment spans residues 904-914; it reads VLMRTMDNVAT. The chain crosses the membrane as a helical span at residues 915–935; it reads FCMLLMLFIFIFSILGMHLFG. Topologically, residues 936-987 are extracellular; that stretch reads CKFSLKTDSGDTVPDRKNFDSLLWAIVTVFQILTQEDWNVVLYNGMASTSSW. Residues 988-1012 form a helical membrane-spanning segment; sequence AALYFVALMTFGNYVLFNLLVAILV. At 1013 to 1301 the chain is on the cytoplasmic side; sequence EGFQAEGDAT…NRLRVSCQKV (289 aa). Positions 1059-1215 are disordered; sequence PNGHLEGRGS…HRSTMDLCPP (157 aa). Residues 1130-1147 are compositionally biased toward low complexity; it reads GPNSAGSSRRSSWNSLGR. Positions 1199–1209 are enriched in basic and acidic residues; sequence RRAESLGHRST. An III repeat occupies 1292–1569; that stretch reads NRLRVSCQKV…MFVGVVVENF (278 aa). Residues 1302–1324 form a helical membrane-spanning segment; the sequence is IAHKMFDHVVLVFIFLNCITIAL. The Extracellular segment spans residues 1325–1342; that stretch reads ERPDIDPGSTERAFLSVS. The chain crosses the membrane as a helical span at residues 1343–1363; it reads NYIFTAIFVVEMMVKVVALGL. Over 1364 to 1373 the chain is Cytoplasmic; the sequence is LWGEHAYLQS. A helical membrane pass occupies residues 1374 to 1393; that stretch reads SWNVLDGLLVLVSLVDIIVA. The Extracellular portion of the chain corresponds to 1394 to 1407; the sequence is VASAGGAKILGVLR. The chain crosses the membrane as a helical span at residues 1408–1429; it reads VLRLLRTLRPLRVISRAPGLKL. Topologically, residues 1430–1439 are cytoplasmic; that stretch reads VVETLISSLR. A helical transmembrane segment spans residues 1440 to 1463; the sequence is PIGNIVLICCAFFIIFGILGVQLF. Over 1464–1540 the chain is Extracellular; the sequence is KGKFYYCEGT…DQQPVQNHNP (77 aa). The N-linked (GlcNAc...) asparagine glycan is linked to asparagine 1477. The helical transmembrane segment at 1541 to 1566 threads the bilayer; it reads WMLLYFISFLLIVSFFVLNMFVGVVV. The Cytoplasmic portion of the chain corresponds to 1567–1627; it reads ENFHKCRQHQ…RRSIHSLCTS (61 aa). Residues 1613-1874 form an IV repeat; the sequence is DYSHTRRSIH…VVVAVLMKHL (262 aa). Residues 1628–1648 traverse the membrane as a helical segment; sequence HYLDLFITFIICLNVITMSME. At 1649 to 1662 the chain is on the extracellular side; sequence HYNQPKSLDEALKY. Residues 1663–1684 traverse the membrane as a helical segment; the sequence is CNYVFTIVFVFEAALKLVAFGF. Residues 1685–1691 are Cytoplasmic-facing; sequence RRFFKDR. A helical membrane pass occupies residues 1692–1710; sequence WNQLDLAIVLLSIMGIALE. Topologically, residues 1711–1724 are extracellular; the sequence is EIEMNAALPINPTI. Residues 1725-1748 form a helical membrane-spanning segment; sequence IRIMRVLRIARVLKLLKMATGMRA. The Cytoplasmic portion of the chain corresponds to 1749-1762; it reads LLDTVVQALPQVGN. The chain crosses the membrane as a helical span at residues 1763 to 1783; sequence LGLLFMLLFFIYAALGVELFG. At 1784-1846 the chain is on the extracellular side; it reads RLECSEDNPC…KHCLSYLPAL (63 aa). Residues 1847 to 1874 traverse the membrane as a helical segment; it reads SPVYFVTFVLVAQFVLVNVVVAVLMKHL. The Cytoplasmic portion of the chain corresponds to 1875 to 2365; sequence EESNKEARED…APDDSGDEPV (491 aa). Polar residues-rich tracts occupy residues 1897 to 1916 and 1967 to 1983; these read QGST…TEPD and VTSA…SFQV. 4 disordered regions span residues 1897 to 1920, 1967 to 1999, 2053 to 2264, and 2321 to 2365; these read QGST…TPNL, VTSA…PLCA, APLG…GERW, and ELSM…DEPV. Over residues 2092-2102 the composition is skewed to acidic residues; sequence DDAEAADPADE. A compositionally biased stretch (basic and acidic residues) spans 2172 to 2187; the sequence is GDGHLESGEVRARASE.

This sequence belongs to the calcium channel alpha-1 subunit (TC 1.A.1.11) family. CACNA1H subfamily. As to quaternary structure, interacts (via N-terminal cytoplasmic domain) with STAC. Post-translationally, in response to raising of intracellular calcium, the T-type channels are activated by CaM-kinase II. Is highly expressed in lumbosacral and thoracolumbar dorsal root ganglion neurons.

The protein localises to the cell membrane. The enzyme catalyses Ca(2+)(in) = Ca(2+)(out). Voltage-sensitive calcium channel that gives rise to T-type calcium currents. T-type calcium channels belong to the 'low-voltage activated (LVA)' group. A particularity of this type of channel is an opening at quite negative potentials, and a voltage-dependent inactivation. T-type channels serve pacemaking functions in both central neurons and cardiac nodal cells and support calcium signaling in secretory cells and vascular smooth muscle. They may also be involved in the modulation of firing patterns of neurons. In the adrenal zona glomerulosa, participates in the signaling pathway leading to aldosterone production in response to either AGT/angiotensin II, or hyperkalemia. This Mus musculus (Mouse) protein is Voltage-dependent T-type calcium channel subunit alpha-1H (Cacna1h).